Consider the following 365-residue polypeptide: tRNA N6-adenosine threonylcarbamoyltransferase (365 aa).

Residues His119 and His123 each contribute to the Fe cation site. Residues 141–145, Asp174, Gly187, and Asn288 each bind substrate; that span reads LVSGG. Asp316 contacts Fe cation.

It belongs to the KAE1 / TsaD family. The cofactor is Fe(2+).

The protein localises to the cytoplasm. It carries out the reaction L-threonylcarbamoyladenylate + adenosine(37) in tRNA = N(6)-L-threonylcarbamoyladenosine(37) in tRNA + AMP + H(+). Functionally, required for the formation of a threonylcarbamoyl group on adenosine at position 37 (t(6)A37) in tRNAs that read codons beginning with adenine. Is involved in the transfer of the threonylcarbamoyl moiety of threonylcarbamoyl-AMP (TC-AMP) to the N6 group of A37, together with TsaE and TsaB. TsaD likely plays a direct catalytic role in this reaction. The chain is tRNA N6-adenosine threonylcarbamoyltransferase from Agrobacterium fabrum (strain C58 / ATCC 33970) (Agrobacterium tumefaciens (strain C58)).